Here is a 220-residue protein sequence, read N- to C-terminus: Probable chemoreceptor glutamine deamidase CheD 2 (220 aa).

It belongs to the CheD family.

The catalysed reaction is L-glutaminyl-[protein] + H2O = L-glutamyl-[protein] + NH4(+). In terms of biological role, probably deamidates glutamine residues to glutamate on methyl-accepting chemotaxis receptors (MCPs), playing an important role in chemotaxis. This Methanosarcina acetivorans (strain ATCC 35395 / DSM 2834 / JCM 12185 / C2A) protein is Probable chemoreceptor glutamine deamidase CheD 2.